Here is a 239-residue protein sequence, read N- to C-terminus: Ribonuclease PH (239 aa).

Residues Arg87 and 125–127 (GTR) each bind phosphate.

This sequence belongs to the RNase PH family. As to quaternary structure, homohexameric ring arranged as a trimer of dimers.

The catalysed reaction is tRNA(n+1) + phosphate = tRNA(n) + a ribonucleoside 5'-diphosphate. Functionally, phosphorolytic 3'-5' exoribonuclease that plays an important role in tRNA 3'-end maturation. Removes nucleotide residues following the 3'-CCA terminus of tRNAs; can also add nucleotides to the ends of RNA molecules by using nucleoside diphosphates as substrates, but this may not be physiologically important. Probably plays a role in initiation of 16S rRNA degradation (leading to ribosome degradation) during starvation. This is Ribonuclease PH from Cyanothece sp. (strain PCC 7425 / ATCC 29141).